Here is a 142-residue protein sequence, read N- to C-terminus: Large ribosomal subunit protein uL11 (142 aa).

Belongs to the universal ribosomal protein uL11 family. As to quaternary structure, part of the ribosomal stalk of the 50S ribosomal subunit. Interacts with L10 and the large rRNA to form the base of the stalk. L10 forms an elongated spine to which L12 dimers bind in a sequential fashion forming a multimeric L10(L12)X complex. Post-translationally, one or more lysine residues are methylated.

Functionally, forms part of the ribosomal stalk which helps the ribosome interact with GTP-bound translation factors. This Serratia proteamaculans (strain 568) protein is Large ribosomal subunit protein uL11.